Reading from the N-terminus, the 385-residue chain is Cytochrome b (385 aa).

The next 4 membrane-spanning stretches (helical) occupy residues 32 to 52 (MGSL…FMAM), 76 to 98 (YILR…MHMA), 113 to 133 (LWNV…LGYC), and 179 to 199 (FFAL…MHLM). Residues His82 and His96 each coordinate heme b. Positions 183 and 197 each coordinate heme b. His202 contacts a ubiquinone. The next 4 helical transmembrane spans lie at 225-245 (FIFK…LFVF), 289-309 (LLGV…PFTD), 321-341 (LSKF…QIGA), and 348-368 (YVLM…IIVP).

Belongs to the cytochrome b family. In terms of assembly, fungal cytochrome b-c1 complex contains 10 subunits; 3 respiratory subunits, 2 core proteins and 5 low-molecular weight proteins. Cytochrome b-c1 complex is a homodimer. Heme b serves as cofactor.

Its subcellular location is the mitochondrion inner membrane. Component of the ubiquinol-cytochrome c reductase complex (complex III or cytochrome b-c1 complex) that is part of the mitochondrial respiratory chain. The b-c1 complex mediates electron transfer from ubiquinol to cytochrome c. Contributes to the generation of a proton gradient across the mitochondrial membrane that is then used for ATP synthesis. The sequence is that of Cytochrome b (COB) from Saccharomyces paradoxus (Yeast).